The primary structure comprises 445 residues: tRNA modification GTPase MnmE (445 aa).

Residues arginine 20, glutamate 79, and lysine 119 each coordinate (6S)-5-formyl-5,6,7,8-tetrahydrofolate. Residues 215–371 form the TrmE-type G domain; the sequence is GLKLAIIGPP…ILKNIEEIAE (157 aa). Residue asparagine 225 participates in K(+) binding. GTP contacts are provided by residues 225–230, 244–250, and 269–272; these read NAGKSS, SNIAGTT, and DTAG. A Mg(2+)-binding site is contributed by serine 229. K(+) is bound by residues serine 244, isoleucine 246, and threonine 249. Position 250 (threonine 250) interacts with Mg(2+). Lysine 445 provides a ligand contact to (6S)-5-formyl-5,6,7,8-tetrahydrofolate.

The protein belongs to the TRAFAC class TrmE-Era-EngA-EngB-Septin-like GTPase superfamily. TrmE GTPase family. As to quaternary structure, homodimer. Heterotetramer of two MnmE and two MnmG subunits. K(+) serves as cofactor.

It localises to the cytoplasm. Functionally, exhibits a very high intrinsic GTPase hydrolysis rate. Involved in the addition of a carboxymethylaminomethyl (cmnm) group at the wobble position (U34) of certain tRNAs, forming tRNA-cmnm(5)s(2)U34. The protein is tRNA modification GTPase MnmE of Rickettsia bellii (strain OSU 85-389).